A 247-amino-acid chain; its full sequence is V-type proton ATPase subunit D (247 aa).

The protein belongs to the V-ATPase D subunit family. As to quaternary structure, V-ATPase is a heteromultimeric enzyme made up of two complexes: the ATP-hydrolytic V1 complex and the proton translocation V0 complex. The V1 complex consists of three catalytic AB heterodimers that form a heterohexamer, three peripheral stalks each consisting of EG heterodimers, one central rotor including subunits D and F, and the regulatory subunits C and H. The proton translocation complex V0 consists of the proton transport subunit a, a ring of proteolipid subunits c9c'', rotary subunit d, subunits e and f, and the accessory subunits ATP6AP1/Ac45 and ATP6AP2/PRR. Interacts with SNX10.

Its subcellular location is the membrane. The protein resides in the cytoplasmic vesicle. It localises to the clathrin-coated vesicle membrane. The protein localises to the cytoplasm. It is found in the cytoskeleton. Its subcellular location is the microtubule organizing center. The protein resides in the centrosome. It localises to the cell projection. The protein localises to the cilium. Functionally, subunit of the V1 complex of vacuolar(H+)-ATPase (V-ATPase), a multisubunit enzyme composed of a peripheral complex (V1) that hydrolyzes ATP and a membrane integral complex (V0) that translocates protons. V-ATPase is responsible for acidifying and maintaining the pH of intracellular compartments and in some cell types, is targeted to the plasma membrane, where it is responsible for acidifying the extracellular environment. May play a role in cilium biogenesis through regulation of the transport and the localization of proteins to the cilium. This chain is V-type proton ATPase subunit D (ATP6V1D), found in Homo sapiens (Human).